The chain runs to 476 residues: UPF0481 protein At3g47200 (476 aa).

The tract at residues 1–24 (MADKTDIISSSSDKASPPPPSAFR) is disordered. Transmembrane regions (helical) follow at residues 133 to 153 (LMFM…IMSG) and 439 to 459 (AVLF…LSYL).

This sequence belongs to the UPF0481 family.

The protein localises to the membrane. The sequence is that of UPF0481 protein At3g47200 from Arabidopsis thaliana (Mouse-ear cress).